The chain runs to 120 residues: UPF0231 protein ETA_08290 (120 aa).

The protein belongs to the UPF0231 family.

The chain is UPF0231 protein ETA_08290 from Erwinia tasmaniensis (strain DSM 17950 / CFBP 7177 / CIP 109463 / NCPPB 4357 / Et1/99).